The chain runs to 196 residues: Small ribosomal subunit protein uS4c (196 aa).

The tract at residues 17–36 (ALPGLTRKTPKSGSNLKKKF) is disordered. Residues 89 to 157 (MRLDNILFRL…VQNYIASSDP (69 aa)) enclose the S4 RNA-binding domain.

The protein belongs to the universal ribosomal protein uS4 family. In terms of assembly, part of the 30S ribosomal subunit. Contacts protein S5. The interaction surface between S4 and S5 is involved in control of translational fidelity.

It is found in the plastid. Its subcellular location is the chloroplast. In terms of biological role, one of the primary rRNA binding proteins, it binds directly to 16S rRNA where it nucleates assembly of the body of the 30S subunit. With S5 and S12 plays an important role in translational accuracy. The chain is Small ribosomal subunit protein uS4c (rps4) from Calamagrostis epigeios (Wood small-reed grass).